The sequence spans 143 residues: Transcriptional regulator MraZ (143 aa).

SpoVT-AbrB domains are found at residues 5 to 47 (EYRH…TQEE) and 76 to 119 (ATEC…SEDR).

This sequence belongs to the MraZ family. In terms of assembly, forms oligomers.

It is found in the cytoplasm. It localises to the nucleoid. This is Transcriptional regulator MraZ from Ligilactobacillus salivarius (strain UCC118) (Lactobacillus salivarius).